We begin with the raw amino-acid sequence, 141 residues long: Large ribosomal subunit protein uL6 (141 aa).

This sequence belongs to the universal ribosomal protein uL6 family.

This chain is Large ribosomal subunit protein uL6, found in Haemonchus contortus (Barber pole worm).